The chain runs to 141 residues: MEQTLSIIKPDSVGKAHIGEIVAIFEKSGFRIAAMKMVHLSVKEAEGFYAVHKSRPFFQELVDFMISGPVVVMVLEGDNAVVRNREIMGATNPQEAAQGTIRAQFGESIGINAVHGSDSLENAAIEINYFFSKIEIVNSAK.

ATP is bound by residues lysine 9, phenylalanine 57, arginine 85, threonine 91, arginine 102, and asparagine 112. Catalysis depends on histidine 115, which acts as the Pros-phosphohistidine intermediate.

Belongs to the NDK family. As to quaternary structure, homotetramer. Requires Mg(2+) as cofactor.

It localises to the cytoplasm. It carries out the reaction a 2'-deoxyribonucleoside 5'-diphosphate + ATP = a 2'-deoxyribonucleoside 5'-triphosphate + ADP. The enzyme catalyses a ribonucleoside 5'-diphosphate + ATP = a ribonucleoside 5'-triphosphate + ADP. In terms of biological role, major role in the synthesis of nucleoside triphosphates other than ATP. The ATP gamma phosphate is transferred to the NDP beta phosphate via a ping-pong mechanism, using a phosphorylated active-site intermediate. This Chlamydia caviae (strain ATCC VR-813 / DSM 19441 / 03DC25 / GPIC) (Chlamydophila caviae) protein is Nucleoside diphosphate kinase.